The primary structure comprises 212 residues: General odorant-binding protein 68 (212 aa).

The signal sequence occupies residues 1–28 (MATTIARIGSANWAKLLVLLWLVQLATA). Intrachain disulfides connect C64-C85, C80-C152, and C130-C162.

Belongs to the PBP/GOBP family.

It localises to the secreted. Present in the aqueous fluid surrounding olfactory sensory dendrites and are thought to aid in the capture and transport of hydrophobic odorants into and through this fluid. This chain is General odorant-binding protein 68 (Obp68), found in Anopheles gambiae (African malaria mosquito).